A 418-amino-acid polypeptide reads, in one-letter code: Argininosuccinate synthase (418 aa).

16–24 (AYSGGLDTS) is a binding site for ATP. Y95 contacts L-citrulline. An ATP-binding site is contributed by G125. Positions 127, 131, and 132 each coordinate L-aspartate. An L-citrulline-binding site is contributed by N131. L-citrulline-binding residues include R135, S183, E267, and Y279.

Belongs to the argininosuccinate synthase family. Type 1 subfamily. As to quaternary structure, homotetramer.

It is found in the cytoplasm. The catalysed reaction is L-citrulline + L-aspartate + ATP = 2-(N(omega)-L-arginino)succinate + AMP + diphosphate + H(+). It functions in the pathway amino-acid biosynthesis; L-arginine biosynthesis; L-arginine from L-ornithine and carbamoyl phosphate: step 2/3. The polypeptide is Argininosuccinate synthase (Bifidobacterium adolescentis (strain ATCC 15703 / DSM 20083 / NCTC 11814 / E194a)).